A 210-amino-acid chain; its full sequence is 3-oxo-tetronate 4-phosphate decarboxylase (210 aa).

The Proton acceptor role is filled by Glu-74. The Zn(2+) site is built by Glu-74, His-93, and His-95. Residue Tyr-120 is the Proton donor of the active site. A Zn(2+)-binding site is contributed by His-160.

This sequence belongs to the aldolase class II family. AraD/FucA subfamily. Zn(2+) serves as cofactor.

It catalyses the reaction 3-dehydro-4-O-phospho-D-erythronate + H(+) = dihydroxyacetone phosphate + CO2. The catalysed reaction is 3-dehydro-4-O-phospho-L-erythronate + H(+) = dihydroxyacetone phosphate + CO2. Catalyzes the decarboxylation of 3-oxo-tetronate 4-phosphate to dihydroxyacetone phosphate (DHAP) and CO(2). This chain is 3-oxo-tetronate 4-phosphate decarboxylase, found in Haemophilus influenzae (strain ATCC 51907 / DSM 11121 / KW20 / Rd).